We begin with the raw amino-acid sequence, 220 residues long: Riboflavin kinase (220 aa).

The interval 1–92 is H-T-H motif-like; sequence MDTSDQYYRA…LSRILSIKSN (92 aa). Residues 93 to 220 are riboflavin kinase; the sequence is IVMTGIVVPG…GDEVTIEVTA (128 aa). 102 to 107 contacts CDP; the sequence is GMGEGK. Mg(2+) is bound by residues threonine 131 and asparagine 133. FMN contacts are provided by threonine 188 and glutamate 195. 200 to 203 is a binding site for CDP; the sequence is KYLR.

The protein belongs to the archaeal riboflavin kinase family. Mg(2+) serves as cofactor.

It carries out the reaction riboflavin + CTP = CDP + FMN + H(+). It functions in the pathway cofactor biosynthesis; FMN biosynthesis; FMN from riboflavin (CTP route): step 1/1. In terms of biological role, catalyzes the CTP-dependent phosphorylation of riboflavin (vitamin B2) to form flavin mononucleotide (FMN). This Thermoplasma volcanium (strain ATCC 51530 / DSM 4299 / JCM 9571 / NBRC 15438 / GSS1) protein is Riboflavin kinase (ribK).